A 466-amino-acid chain; its full sequence is Uronate isomerase (466 aa).

This sequence belongs to the metallo-dependent hydrolases superfamily. Uronate isomerase family.

It catalyses the reaction D-glucuronate = D-fructuronate. The catalysed reaction is aldehydo-D-galacturonate = keto-D-tagaturonate. It participates in carbohydrate metabolism; pentose and glucuronate interconversion. The sequence is that of Uronate isomerase from Streptococcus pneumoniae (strain 70585).